The chain runs to 285 residues: tRNA-cytidine(32) 2-sulfurtransferase (285 aa).

Residues 49 to 54 (SGGKDS) carry the PP-loop motif motif. The [4Fe-4S] cluster site is built by Cys124, Cys127, and Cys215.

The protein belongs to the TtcA family. As to quaternary structure, homodimer. It depends on Mg(2+) as a cofactor. [4Fe-4S] cluster is required as a cofactor.

It localises to the cytoplasm. It carries out the reaction cytidine(32) in tRNA + S-sulfanyl-L-cysteinyl-[cysteine desulfurase] + AH2 + ATP = 2-thiocytidine(32) in tRNA + L-cysteinyl-[cysteine desulfurase] + A + AMP + diphosphate + H(+). Its pathway is tRNA modification. Functionally, catalyzes the ATP-dependent 2-thiolation of cytidine in position 32 of tRNA, to form 2-thiocytidine (s(2)C32). The sulfur atoms are provided by the cysteine/cysteine desulfurase (IscS) system. This is tRNA-cytidine(32) 2-sulfurtransferase from Hahella chejuensis (strain KCTC 2396).